The chain runs to 634 residues: Ras and EF-hand domain-containing protein homolog (634 aa).

EF-hand domains are found at residues 5-33 (EVENLFSLCDSESKGYLTMEDLRKVCPQL) and 33-68 (LDDNDLRFIFTELDQDGSGKIEKLEFLRGFQDTVQH). 5 residues coordinate Ca(2+): aspartate 46, aspartate 48, serine 50, lysine 52, and glutamate 57. The stretch at 169 to 310 (LSEKKHENER…RCEFDQKQDE (142 aa)) forms a coiled coil. The disordered stretch occupies residues 212–234 (ARQEERDRLTKEKEEMRQRMSDE). Residues 449–454 (AVGKSS), 552–555 (NKVD), and 585–586 (AL) contribute to the GTP site. Residues 632 to 634 (RGS) constitute a propeptide, removed in mature form.

It belongs to the small GTPase superfamily. Rab family. In terms of assembly, homodimer.

The protein resides in the cytoplasm. It is found in the perinuclear region. Binds GTP and GDP. Plays a role in uterine seam cell development. The protein is Ras and EF-hand domain-containing protein homolog of Caenorhabditis elegans.